The sequence spans 419 residues: Glutamyl-tRNA reductase (419 aa).

Residues 50-53 (TCNR), Ser108, 113-115 (ETQ), and Gln119 each bind substrate. Catalysis depends on Cys51, which acts as the Nucleophile. 188–193 (GAGEMI) serves as a coordination point for NADP(+).

It belongs to the glutamyl-tRNA reductase family. In terms of assembly, homodimer.

The catalysed reaction is (S)-4-amino-5-oxopentanoate + tRNA(Glu) + NADP(+) = L-glutamyl-tRNA(Glu) + NADPH + H(+). Its pathway is porphyrin-containing compound metabolism; protoporphyrin-IX biosynthesis; 5-aminolevulinate from L-glutamyl-tRNA(Glu): step 1/2. Catalyzes the NADPH-dependent reduction of glutamyl-tRNA(Glu) to glutamate 1-semialdehyde (GSA). The chain is Glutamyl-tRNA reductase from Albidiferax ferrireducens (strain ATCC BAA-621 / DSM 15236 / T118) (Rhodoferax ferrireducens).